A 311-amino-acid polypeptide reads, in one-letter code: 4-hydroxy-3-methylbut-2-enyl diphosphate reductase (311 aa).

Position 12 (cysteine 12) interacts with [4Fe-4S] cluster. (2E)-4-hydroxy-3-methylbut-2-enyl diphosphate contacts are provided by histidine 41 and histidine 74. Positions 41 and 74 each coordinate dimethylallyl diphosphate. 2 residues coordinate isopentenyl diphosphate: histidine 41 and histidine 74. Residue cysteine 96 participates in [4Fe-4S] cluster binding. Histidine 124 contributes to the (2E)-4-hydroxy-3-methylbut-2-enyl diphosphate binding site. Histidine 124 provides a ligand contact to dimethylallyl diphosphate. Position 124 (histidine 124) interacts with isopentenyl diphosphate. Catalysis depends on glutamate 126, which acts as the Proton donor. Threonine 167 serves as a coordination point for (2E)-4-hydroxy-3-methylbut-2-enyl diphosphate. Cysteine 197 serves as a coordination point for [4Fe-4S] cluster. 4 residues coordinate (2E)-4-hydroxy-3-methylbut-2-enyl diphosphate: serine 225, serine 226, asparagine 227, and serine 269. Dimethylallyl diphosphate is bound by residues serine 225, serine 226, asparagine 227, and serine 269. Residues serine 225, serine 226, asparagine 227, and serine 269 each contribute to the isopentenyl diphosphate site.

This sequence belongs to the IspH family. The cofactor is [4Fe-4S] cluster.

It carries out the reaction isopentenyl diphosphate + 2 oxidized [2Fe-2S]-[ferredoxin] + H2O = (2E)-4-hydroxy-3-methylbut-2-enyl diphosphate + 2 reduced [2Fe-2S]-[ferredoxin] + 2 H(+). It catalyses the reaction dimethylallyl diphosphate + 2 oxidized [2Fe-2S]-[ferredoxin] + H2O = (2E)-4-hydroxy-3-methylbut-2-enyl diphosphate + 2 reduced [2Fe-2S]-[ferredoxin] + 2 H(+). Its pathway is isoprenoid biosynthesis; dimethylallyl diphosphate biosynthesis; dimethylallyl diphosphate from (2E)-4-hydroxy-3-methylbutenyl diphosphate: step 1/1. The protein operates within isoprenoid biosynthesis; isopentenyl diphosphate biosynthesis via DXP pathway; isopentenyl diphosphate from 1-deoxy-D-xylulose 5-phosphate: step 6/6. In terms of biological role, catalyzes the conversion of 1-hydroxy-2-methyl-2-(E)-butenyl 4-diphosphate (HMBPP) into a mixture of isopentenyl diphosphate (IPP) and dimethylallyl diphosphate (DMAPP). Acts in the terminal step of the DOXP/MEP pathway for isoprenoid precursor biosynthesis. This is 4-hydroxy-3-methylbut-2-enyl diphosphate reductase from Aeromonas salmonicida (strain A449).